Reading from the N-terminus, the 285-residue chain is Short chain dehydrogenase sol3 (285 aa).

Positions 39, 64, and 87 each coordinate NADP(+). Active-site proton donor residues include serine 168 and tyrosine 200. Tyrosine 200, lysine 204, and serine 234 together coordinate NADP(+). Catalysis depends on lysine 204, which acts as the Lowers pKa of active site Tyr.

The protein belongs to the short-chain dehydrogenases/reductases (SDR) family.

It participates in phytotoxin biosynthesis. In terms of biological role, short chain dehydrogenase; part of the gene cluster that mediates the biosynthesis of the phytotoxin solanapyrone, a causal agent of early blight disease of potato and tomato. The prosolanapyrone synthase sol1 is a polyketide synthase that produces the octaketide desmethylprosolanapyrone I via sequential condensations of 7 malonyl-CoA units with one acetyl-CoA unit, and one methylation step. The octaketide backbone is further methylated by the sol2 O-methyltransferase to yield prosolanapyrone I. Prosolanapyrone I is hydroxylated to prosolanapyrone II by the cytochrome P450 monooxygenase sol6. The solanapyrone synthase sol5 then catalyzes the oxidation of prosolanapyrone II and the subsequent Diels Alder cycloisomerization of the product prosolanapyrone III to solanapyrones A and D. Solanapyrones A and D are then converted into solanapyrones B and E, respectively, by the sol3 dehydrogenase. This is Short chain dehydrogenase sol3 (sol3) from Alternaria solani.